We begin with the raw amino-acid sequence, 76 residues long: uncharacterized protein (76 aa).

A helical membrane pass occupies residues 20–42; sequence GIVWGPKLAPWGITLGLGAFYFF.

It is found in the membrane. This is an uncharacterized protein from Dictyostelium discoideum (Social amoeba).